Consider the following 82-residue polypeptide: MNHKFIALLLVVLCCALSVHQVSAEIPSHCTLPLATGTCRGYFPRFGYNVEMGKCVEFIYGGCDGNANNFRNLEECQQSCSV.

An N-terminal signal peptide occupies residues 1 to 24 (MNHKFIALLLVVLCCALSVHQVSA). The region spanning 30-80 (CTLPLATGTCRGYFPRFGYNVEMGKCVEFIYGGCDGNANNFRNLEECQQSC) is the BPTI/Kunitz inhibitor domain. Intrachain disulfides connect C30–C80, C39–C63, and C55–C76.

This sequence belongs to the venom Kunitz-type family. As to expression, expressed by the venom gland.

Its subcellular location is the secreted. Serine protease inhibitor that inhibits plasmin (Ki=2.01 nM) and trypsin. Acts as an antifibrinolytic agent. This is Kunitz-type serine protease inhibitor Bt-KTI from Bombus terrestris (Buff-tailed bumblebee).